A 293-amino-acid polypeptide reads, in one-letter code: Mimecan (293 aa).

The signal sequence occupies residues 1–19 (MKTLQATFFLVAFVPLVKP). A glycan (N-linked (GlcNAc...) asparagine) is linked at Asn60. LRR repeat units lie at residues 107 to 126 (EAVPPLPKETAYLYARFNKI), 127 to 150 (KRIAVSDFADITTLRRIDFSGNMI), 151 to 174 (EEIEDGAFSKLLLLEELSLAENRL), 175 to 194 (VKLPVLPPKLTTFNANQNRI), 195 to 220 (KSRGIKNNAFKKLTNLAYLYLGHNAL), 221 to 241 (ESVPLNLPESLRILHLQHNNI), and 242 to 272 (TTITDDTFCKSNNTRYIRTRMDEIRMEGNPI). N-linked (GlcNAc...) asparagine glycans are attached at residues Asn240 and Asn253. Cysteines 250 and 283 form a disulfide.

The protein belongs to the small leucine-rich proteoglycan (SLRP) family. SLRP class III subfamily. Contains keratan sulfate. As to expression, expressed in many tissues.

It is found in the secreted. Its subcellular location is the extracellular space. It localises to the extracellular matrix. In terms of biological role, induces bone formation in conjunction with TGF-beta-1 or TGF-beta-2. In Coturnix japonica (Japanese quail), this protein is Mimecan (OGN).